The primary structure comprises 151 residues: MSKELMVSKIERGTVIDHIPAGRALAVLRVLGITGREGVRVALVMNVESKKLGRKDIVKIEGRELTPEEVNIISAVAPTATINIVRDYTVVRKFKVSPPEVVKGRFRCKNPTCITNAPREPVEPTFLLVRREPPLFVCTYCGRYHELGDLL.

Cysteine 108, cysteine 113, cysteine 138, and cysteine 141 together coordinate Zn(2+).

It belongs to the PyrI family. Contains catalytic and regulatory chains. The cofactor is Zn(2+).

Its function is as follows. Involved in allosteric regulation of aspartate carbamoyltransferase. The polypeptide is Aspartate carbamoyltransferase regulatory chain (Pyrobaculum neutrophilum (strain DSM 2338 / JCM 9278 / NBRC 100436 / V24Sta) (Thermoproteus neutrophilus)).